A 388-amino-acid polypeptide reads, in one-letter code: Succinate--CoA ligase [ADP-forming] subunit beta (388 aa).

Residues 9 to 244 (KSLFAEYGLP…PSQDDAREAH (236 aa)) form the ATP-grasp domain. ATP-binding positions include lysine 46, 53-55 (GRG), glutamate 99, threonine 102, and glutamate 107. Mg(2+) is bound by residues asparagine 199 and aspartate 213. Substrate-binding positions include asparagine 264 and 321 to 323 (GIV).

The protein belongs to the succinate/malate CoA ligase beta subunit family. Heterotetramer of two alpha and two beta subunits. Mg(2+) serves as cofactor.

The catalysed reaction is succinate + ATP + CoA = succinyl-CoA + ADP + phosphate. It catalyses the reaction GTP + succinate + CoA = succinyl-CoA + GDP + phosphate. The protein operates within carbohydrate metabolism; tricarboxylic acid cycle; succinate from succinyl-CoA (ligase route): step 1/1. Functionally, succinyl-CoA synthetase functions in the citric acid cycle (TCA), coupling the hydrolysis of succinyl-CoA to the synthesis of either ATP or GTP and thus represents the only step of substrate-level phosphorylation in the TCA. The beta subunit provides nucleotide specificity of the enzyme and binds the substrate succinate, while the binding sites for coenzyme A and phosphate are found in the alpha subunit. The sequence is that of Succinate--CoA ligase [ADP-forming] subunit beta from Shewanella putrefaciens (strain CN-32 / ATCC BAA-453).